The chain runs to 103 residues: MTEYTRKIKGGLSEARPATSEIQEIADKVRPLLEEKTNEKYEKFKAIEYKVQVVQGLNYFIKMNVGRGCYLHINVLSGISSENDLELTGYQTNKAKNDELTYF.

The Secondary area of contact signature appears at Gln-52–Gly-56.

Belongs to the cystatin family.

The protein resides in the cytoplasm. This is an intracellular thiol proteinase inhibitor. This Mus musculus (Mouse) protein is Stefin-2 (Stfa2).